Reading from the N-terminus, the 398-residue chain is Phosphoglycerate kinase (398 aa).

Substrate contacts are provided by residues 22 to 24 (DFN), Arg-38, 61 to 64 (HLGR), Arg-120, and Arg-153. ATP is bound by residues Lys-206, Gly-297, Glu-328, and 354–357 (GGDT).

This sequence belongs to the phosphoglycerate kinase family. In terms of assembly, monomer.

The protein resides in the cytoplasm. It catalyses the reaction (2R)-3-phosphoglycerate + ATP = (2R)-3-phospho-glyceroyl phosphate + ADP. It participates in carbohydrate degradation; glycolysis; pyruvate from D-glyceraldehyde 3-phosphate: step 2/5. This chain is Phosphoglycerate kinase, found in Nautilia profundicola (strain ATCC BAA-1463 / DSM 18972 / AmH).